The chain runs to 920 residues: MEAIDELSQLSDSMRQAASLLADEDPDETSSSRRPATSLNVVALGNVGAGKSAVLNSLIGHPVLPTGENGATRAPIIIDLSREESLSSKAIILQIDNKNQQVSASALRHSLQDRLSKGASGRGRDEIYLKLRTSTAPPLKLIDLPGLDQRIVDDSMIGEHAQHNDAILLVVVPASQASEISSSRALKIAKEYDPESTRTVGIISKIDQAAENPKSLAAVQALLSNQGPPKTTDIPWVALIGQSVSIASAQSGGSENSLETAWRAESESLKSILTGAPQSKLGRIALVDTLASQIRSRMKLRLPNILTGLQGKSQIVQDELARLGEQLVSSAEGTRAIALELCREFEDKFLLHLAGGEGSGWKVVASFEGNFPNRIKKLPLDRHFDLNNVKRIVLEADGYQPYLISPEKGLRSLIKTVLELAKDPARLCVDEVHRVLVDIVSASANATPGLGRYPPFKREVVAIASAALDGFKNEAKKMVVALVDMERAFVPPQHFIRLVQRRMERQRREEELKGRSSKKGQDAEQSLLNRATSPQPDGPSSTGGSLKSLRDKLMPQDKDKDKEKETPEVSGLKTAGPEGEITAGYLMKKSAKTNGWSRRWFVLNEKTGKLGYTKKQEERNFRGTVTLEECSIEEISDDEGEKSKSSKDKKSNGPDSKGPGLVFKITCRVPYKTVLKAHNALVLKAESMVDKNEWINKLQKVIQARGGQVGSASMRQSLSEGSLDKMVRKPVDPEEELRWMSQEVRGYVEAVLNSLAANVPKAVVLCQVEKSKEDMLNQLYSSISAIGNERIESLIQEDQNVKRRRDRYQKQSSLLSKLTRQLSIHDNRAAAASSWSDNSGTESSPRTNGGSSGEDWMNAFNAAASGPDSLKRYGSGGHSRRYSDPAQNGEDSSGSGGSSRRTTPNRLPPAPPQSGSSYRY.

M1 carries the N-acetylmethionine modification. A Dynamin-type G domain is found at 35 to 303; it reads PATSLNVVAL…IRSRMKLRLP (269 aa). Residues 45-52 form a G1 motif region; sequence GNVGAGKS. GTP is bound at residue 45-53; it reads GNVGAGKSA. Residues 71–73 are G2 motif; that stretch reads ATR. The G3 motif stretch occupies residues 143 to 146; that stretch reads DLPG. Residues 204–207 are G4 motif; the sequence is SKID. Residue 204 to 210 coordinates GTP; that stretch reads SKIDQAA. The tract at residues 238 to 241 is G5 motif; that stretch reads ALIG. 246 to 249 contributes to the GTP binding site; that stretch reads IASA. Residues 507–522 are compositionally biased toward basic and acidic residues; it reads RREEELKGRSSKKGQD. Disordered regions lie at residues 507–577 and 632–657; these read RREE…TAGP and IEEI…PDSK. Over residues 523-545 the composition is skewed to polar residues; that stretch reads AEQSLLNRATSPQPDGPSSTGGS. 2 stretches are compositionally biased toward basic and acidic residues: residues 548–567 and 641–652; these read SLRD…KETP and EKSKSSKDKKSN. One can recognise a PH domain in the interval 579 to 703; that stretch reads GEITAGYLMK…WINKLQKVIQ (125 aa). One can recognise a GED domain in the interval 737 to 830; the sequence is LRWMSQEVRG…QLSIHDNRAA (94 aa). The important for homodimerization stretch occupies residues 747–761; sequence YVEAVLNSLAANVPK. Positions 788-812 form a coiled coil; that stretch reads NERIESLIQEDQNVKRRRDRYQKQS. Residues 828–920 form a disordered region; that stretch reads RAAAASSWSD…PPQSGSSYRY (93 aa). Residues 833–849 are compositionally biased toward polar residues; sequence SSWSDNSGTESSPRTNG.

This sequence belongs to the TRAFAC class dynamin-like GTPase superfamily. Dynamin/Fzo/YdjA family. As to quaternary structure, interacts with DRP1A at the plasma membrane and in forming clathrin-coated vesicles (CCV). Ubiquitous. Preferentially expressed in siliques.

It localises to the cytoplasm. The protein resides in the cytoskeleton. It is found in the cytoplasmic vesicle. The protein localises to the clathrin-coated vesicle. Its subcellular location is the cell membrane. It carries out the reaction GTP + H2O = GDP + phosphate + H(+). Functionally, putative microtubule-associated force-producing protein, able to bind and hydrolyze GTP. Collaboratively with DRP1A, participates in clathrin-coated vesicle formation during endocytosis. With DRP1A and PIP5K3, required for the precise coordination of polar ARAC3/ROP6 and ARAC4/ROP2 placement and subsequent root hair positioning during planar polarity formation in root hair-forming cells. The chain is Dynamin-2B from Arabidopsis thaliana (Mouse-ear cress).